Here is a 343-residue protein sequence, read N- to C-terminus: Isopentenyl-diphosphate delta-isomerase (343 aa).

Substrate is bound at residue 9-10; the sequence is RK. Residues Ser67, 68–70, Ser98, and Asn127 each bind FMN; that span reads AMT. Position 98–100 (98–100) interacts with substrate; it reads SQR. Residue Gln162 coordinates substrate. Residue Glu163 coordinates Mg(2+). FMN contacts are provided by residues Lys194, Thr224, 273 to 275, and 294 to 295; these read GVR and AA.

The protein belongs to the IPP isomerase type 2 family. Homooctamer. Dimer of tetramers. Requires FMN as cofactor. NADPH is required as a cofactor. It depends on Mg(2+) as a cofactor.

The protein resides in the cytoplasm. It carries out the reaction isopentenyl diphosphate = dimethylallyl diphosphate. Its function is as follows. Involved in the biosynthesis of isoprenoids. Catalyzes the 1,3-allylic rearrangement of the homoallylic substrate isopentenyl (IPP) to its allylic isomer, dimethylallyl diphosphate (DMAPP). The sequence is that of Isopentenyl-diphosphate delta-isomerase from Xanthobacter autotrophicus (strain ATCC BAA-1158 / Py2).